Consider the following 271-residue polypeptide: Diaminopimelate epimerase (271 aa).

Substrate is bound by residues Asn13, Gln46, and Asn66. Residue Cys75 is the Proton donor of the active site. Substrate-binding positions include 76 to 77 (GN), Asn155, Asn188, and 206 to 207 (ER). Cys215 functions as the Proton acceptor in the catalytic mechanism. Residue 216–217 (GS) participates in substrate binding.

This sequence belongs to the diaminopimelate epimerase family. Homodimer.

Its subcellular location is the cytoplasm. The catalysed reaction is (2S,6S)-2,6-diaminopimelate = meso-2,6-diaminopimelate. Its pathway is amino-acid biosynthesis; L-lysine biosynthesis via DAP pathway; DL-2,6-diaminopimelate from LL-2,6-diaminopimelate: step 1/1. In terms of biological role, catalyzes the stereoinversion of LL-2,6-diaminopimelate (L,L-DAP) to meso-diaminopimelate (meso-DAP), a precursor of L-lysine and an essential component of the bacterial peptidoglycan. The protein is Diaminopimelate epimerase of Vesicomyosocius okutanii subsp. Calyptogena okutanii (strain HA).